A 506-amino-acid chain; its full sequence is Tyrosine-protein kinase FRK (506 aa).

The region spanning 43–111 is the SH3 domain; that stretch reads SQGQYFVALF…PSNYVAEDRS (69 aa). The region spanning 117–209 is the SH2 domain; the sequence is WFFGAIKRAD…GLCVKLEKPC (93 aa). Thr-179 is modified (phosphothreonine). Residues 235-492 form the Protein kinase domain; that stretch reads IQLLKRLGSG…TLHWKLEDYF (258 aa). Residues 241 to 249 and Lys-263 contribute to the ATP site; that span reads LGSGQFGEV. The active-site Proton acceptor is the Asp-355. At Tyr-388 the chain carries Phosphotyrosine; by autocatalysis.

This sequence belongs to the protein kinase superfamily. Tyr protein kinase family. SRC subfamily. As to quaternary structure, interacts (via the SH3-domain) with PTEN. Interacts with RB1. In terms of tissue distribution, highly expressed in stomach, small intestine and colon. Concentrated in the brush border membranes of epithelial cells, throughout the maturation axis of the adult small intestine.

It is found in the cytoplasm. The protein localises to the nucleus. The catalysed reaction is L-tyrosyl-[protein] + ATP = O-phospho-L-tyrosyl-[protein] + ADP + H(+). Functionally, non-receptor tyrosine-protein kinase that negatively regulates cell proliferation. Positively regulates PTEN protein stability through phosphorylation of PTEN on 'Tyr-336', which in turn prevents its ubiquitination and degradation, possibly by reducing its binding to NEDD4. May function as a tumor suppressor. This Rattus norvegicus (Rat) protein is Tyrosine-protein kinase FRK (Frk).